Consider the following 418-residue polypeptide: FXa-directed anticoagulant (418 aa).

The first 19 residues, 1 to 19, serve as a signal peptide directing secretion; the sequence is MNLKIAIIVICQLVYFTQG. N-linked (GlcNAc...) asparagine glycans are attached at residues asparagine 117, asparagine 167, and asparagine 286.

It belongs to the serpin family. As to quaternary structure, interacts with host coagulation factor X/F10 (activated). As to expression, female salivary gland (at protein level).

It localises to the secreted. In terms of biological role, anticoagulant and antithrombotic serpin-type protein inhibiting host coagulation factor Xa (F10). Does not inhibit host uPA/urokinase-type plasminogen activator (PLAU), kallikrein, granzyme B (GZMB), matriptase, elastase, alpha-chymotrypsin, chymase, coagulation factor XIIa (F12), coagulation factor XIa (F11), plasmin (PLG), thrombin (F2), trypsin and cathepsin G (CTSG). Inhibits factor Xa-induced production of pro-inflammatory cytokines, such as MCP-1/CCL2, TNF-alpha/TNF, IL-1beta/IL1B, IL6, IL8/CXCL8 and IL18, in human endothelial cells. Inhibits factor Xa-induced up-regulation of protease-activated receptors (PARs) F2R, F2RL1 and F2RL2 in human endothelial cells. Prevents activation of host F2RL1 via inhibition of F2RL1 cleavage by host factor Xa. Inhibits factor Xa-induced up-regulation of adhesion molecules ICAM1 and VCAM1 in human endothelial cells. Inhibits factor Xa-induced up-regulation of phosphorylated ERK1/2 in human endothelial cells. Inhibits factor Xa-induced activation of transcription factor NF-kappa-B in human endothelial cells. Reduces factor Xa-induced edema in the host. Reduces factor Xa-induced endothelial permeability in the host. The polypeptide is FXa-directed anticoagulant (Aedes albopictus (Asian tiger mosquito)).